A 196-amino-acid chain; its full sequence is Probable malonic semialdehyde reductase RutE (196 aa).

Belongs to the nitroreductase family. HadB/RutE subfamily. It depends on FMN as a cofactor.

It carries out the reaction 3-hydroxypropanoate + NADP(+) = 3-oxopropanoate + NADPH + H(+). In terms of biological role, may reduce toxic product malonic semialdehyde to 3-hydroxypropionic acid, which is excreted. This is Probable malonic semialdehyde reductase RutE from Escherichia coli O8 (strain IAI1).